The chain runs to 286 residues: MTVSKRFLAPVFAMVGGLVLAFSANADPVDEELVIDDIPMVTRAAAPEGHPFDEGLSGWLFREAETRETEADSFANPGMLAVERGADIWNTVEGSAGKSCASCHDDAATSMKNVGAQYPKWDADAKRPINIELQIDKCRVENMGAEPYKFDAEGQVALTSYIKHQSLGTPVKMDLSDGELQDWWEKGKELYYTRTGQLNFACASCHEDSMGKYIRADHLSQGQANGFPTYRFNTGGMVSLHNRFRGCIRDTRAEMPKAFSDELMALEVYVTWRGTGLSVETPAVRQ.

The N-terminal stretch at 1 to 26 is a signal peptide; it reads MTVSKRFLAPVFAMVGGLVLAFSANA. The region spanning 80–166 is the Cytochrome c domain; the sequence is LAVERGADIW…ALTSYIKHQS (87 aa). Residues cysteine 100, cysteine 103, histidine 104, cysteine 138, cysteine 202, cysteine 205, and histidine 206 each coordinate heme. Arginine 243 contributes to the substrate binding site. A heme-binding site is contributed by cysteine 247. Catalysis depends on cysteine 247, which acts as the Cysteine persulfide intermediate.

It belongs to the SoxA family. Heterodimer of SoxA and SoxX. The cofactor is heme. Cysteine persulfide at Cys-247.

The protein localises to the periplasm. The enzyme catalyses L-cysteinyl-[SoxY protein] + thiosulfate + 2 Fe(III)-[cytochrome c] = S-sulfosulfanyl-L-cysteinyl-[SoxY protein] + 2 Fe(II)-[cytochrome c] + 2 H(+). The catalysed reaction is S-sulfanyl-L-cysteinyl-[SoxY protein] + thiosulfate + 2 Fe(III)-[cytochrome c] = S-(2-sulfodisulfanyl)-L-cysteinyl-[SoxY protein] + 2 Fe(II)-[cytochrome c] + 2 H(+). Its function is as follows. C-type diheme cytochrome, which is part of the SoxAX cytochrome complex involved in sulfur oxidation. The SoxAX complex catalyzes the formation of a heterodisulfide bond between the conserved cysteine residue on a sulfur carrier SoxYZ complex subunit SoxY and thiosulfate or other inorganic sulfur substrates. This leads to the liberation of two electrons, which may be transferred from the SoxAX complex to another cytochrome c that then channels them into the respiratory electron transport chain. Some electrons may be used for reductive CO(2) fixation. This chain is L-cysteine S-thiosulfotransferase subunit SoxA, found in Pseudaminobacter salicylatoxidans.